Here is a 409-residue protein sequence, read N- to C-terminus: Protein PHOSPHATE STARVATION RESPONSE 1 (409 aa).

The span at 1-15 (MEARPVHRSGSRDLT) shows a compositional bias: basic and acidic residues. Disordered stretches follow at residues 1–42 (MEAR…NSQL), 86–108 (EKQQ…NNDS), and 178–226 (ETNS…TGKA). 2 stretches are compositionally biased toward polar residues: residues 16 to 26 (RTSSIPSTQKP) and 90 to 108 (HYTG…NNDS). Low complexity predominate over residues 192–224 (QIPQPQIVQQQPSPSVELRPVSTTSSNSNNGTG). The region spanning 222–282 (GTGKARMRWT…HLQKYRTARY (61 aa)) is the HTH myb-type domain. Residues 253 to 278 (PKGVLKIMKVEGLTIYHVKSHLQKYR) constitute a DNA-binding region (H-T-H motif). Residues 314-334 (TEALRLQMEVQKQLHEQLEIQ) adopt a coiled-coil conformation. Positions 327-332 (LHEQLE) match the LHEQLE motif. Residues 358–370 (GLTKGTASTSDSA) show a composition bias toward polar residues. The tract at residues 358–409 (GLTKGTASTSDSAAKSEQEDKKTADSKEVPEEETRKCEELESPQPKRPKIDN) is disordered. The span at 371–396 (AKSEQEDKKTADSKEVPEEETRKCEE) shows a compositional bias: basic and acidic residues. S399 is subject to Phosphoserine.

This sequence belongs to the MYB-CC family. As to quaternary structure, homodimers and heterodimers. Interacts with SPX1 in a Pi-dependent manner. Does not interact with PHL2 or PHL3. In terms of processing, sumoylated by SIZ1. Sumoylation controls phosphate deficiency responses.

It localises to the nucleus. Transcription factor involved in phosphate starvation signaling. Binds as a dimer to P1BS, an imperfect palindromic sequence 5'-GNATATNC-3', to promote the expression of inorganic phosphate (Pi) starvation-responsive genes. SPX1 is a competitive inhibitor of this DNA-binding. PHR1 binding to its targets is low Pi-dependent. Regulates the expression of miR399. Regulates the expression of IPS1 (At3g09922), a non-coding RNA that mimics the target of miR399 to block the cleavage of PHO2 under Pi-deficient conditions. Regulates lipid remodeling and triacylglycerol accumulation during phosphorus starvation. Required for the shoot-specific hypoxic response. Regulates FER1 expression upon phosphate starvation, linking iron and phosphate homeostasis. Contributes to the homeostasis of both sulfate and phosphate in plants under phosphate deficiency. Required for adaptation to high light and retaining functional photosynthesis during phosphate starvation. Involved in the coregulation of Zn and Pi homeostasis. This chain is Protein PHOSPHATE STARVATION RESPONSE 1, found in Arabidopsis thaliana (Mouse-ear cress).